A 379-amino-acid chain; its full sequence is Pectin lyase B (379 aa).

A signal peptide spans 1 to 19 (MRLHAPILSLLAAAASTSA). 2 disulfide bridges follow: Cys-82–Cys-101 and Cys-91–Cys-225. A glycan (N-linked (GlcNAc...) asparagine) is linked at Asn-128. Arg-255 is an active-site residue. Cysteines 322 and 330 form a disulfide.

The protein belongs to the polysaccharide lyase 1 family.

The protein resides in the secreted. The enzyme catalyses Eliminative cleavage of (1-&gt;4)-alpha-D-galacturonan methyl ester to give oligosaccharides with 4-deoxy-6-O-methyl-alpha-D-galact-4-enuronosyl groups at their non-reducing ends.. Its function is as follows. Pectinolytic enzymes consist of four classes of enzymes: pectin lyase, polygalacturonase, pectin methylesterase and rhamnogalacturonase. Among pectinolytic enzymes, pectin lyase is the most important in depolymerization of pectin, since it cleaves internal glycosidic bonds of highly methylated pectins. In Emericella nidulans (strain FGSC A4 / ATCC 38163 / CBS 112.46 / NRRL 194 / M139) (Aspergillus nidulans), this protein is Pectin lyase B (pelB).